Here is a 360-residue protein sequence, read N- to C-terminus: ACT1-like protein (360 aa).

A disordered region spans residues 339-360; it reads KKQSHNNANDHHEDSMNYSITQ.

In terms of assembly, interacts with the receptor complex composed of ilcr-1 and ilcr-2. Also interacts with pik-1. In terms of tissue distribution, expressed in neurons.

May act as an adapter to facilitate downstream signaling for the receptor complex composed of ilcr-1 and ilcr-2, which is a signaling complex that modulates neuronal activity and animal behavior in response to sensory neuron input. This is ACT1-like protein from Caenorhabditis elegans.